Here is a 468-residue protein sequence, read N- to C-terminus: Nucleoprotein (468 aa).

The segment at 1–64 (MSGRNRSRSG…KPKAAPPQNV (64 aa)) is disordered. Basic and acidic residues predominate over residues 18 to 33 (FKQESDGSDSESERRN). An RNA-binding region spans residues 48-193 (GSAPKPEKPK…AEGRGSRGNS (146 aa)). A CoV N NTD domain is found at 62–186 (QNVSWFAPLV…GIPKGFYAEG (125 aa)). RNA is bound by residues Arg-106, Arg-120, and Arg-162. Ser-165 carries the phosphoserine; by host modification. Disordered regions lie at residues 181–228 (GFYA…PSTE), 373–399 (KDFP…IFED), and 419–468 (QTDD…AERS). Over residues 190-223 (RGNSRSSSRNSSRASSRGNSRASSRGASPGRPAA) the composition is skewed to low complexity. In terms of domain architecture, CoV N CTD spans 259-376 (TKNEAAANAK…ENLNAYKDFP (118 aa)). Residues 270–373 (LRHKRTAHKG…ILAENLNAYK (104 aa)) are dimerization. A compositionally biased stretch (basic and acidic residues) spans 379 to 390 (EPKKDKKKKEET). Residues 419–436 (QTDDEWLGGDETVYEDED) are compositionally biased toward acidic residues. Thr-451 bears the Phosphothreonine; by host mark.

It belongs to the betacoronavirus nucleocapsid protein family. Homooligomer. Both monomeric and oligomeric forms interact with RNA. Interacts with protein M. Interacts with NSP3; this interaction serves to tether the genome to the newly translated replicase-transcriptase complex at a very early stage of infection. Post-translationally, ADP-ribosylated. The ADP-ribosylation is retained in the virion during infection. Phosphorylated on serine and threonine residues.

It is found in the virion. It localises to the host endoplasmic reticulum-Golgi intermediate compartment. The protein localises to the host Golgi apparatus. Packages the positive strand viral genome RNA into a helical ribonucleocapsid (RNP) and plays a fundamental role during virion assembly through its interactions with the viral genome and membrane protein M. Plays an important role in enhancing the efficiency of subgenomic viral RNA transcription as well as viral replication. This is Nucleoprotein from Rousettus leschenaultii (Leschenault's rousette).